The following is a 378-amino-acid chain: Phosphoserine aminotransferase (378 aa).

Arg53 serves as a coordination point for L-glutamate. Positions 117, 167, 190, and 213 each coordinate pyridoxal 5'-phosphate. Lys214 is modified (N6-(pyridoxal phosphate)lysine). Pyridoxal 5'-phosphate is bound at residue 255–256; it reads NT.

This sequence belongs to the class-V pyridoxal-phosphate-dependent aminotransferase family. SerC subfamily. As to quaternary structure, homodimer. Pyridoxal 5'-phosphate is required as a cofactor.

It is found in the cytoplasm. The enzyme catalyses O-phospho-L-serine + 2-oxoglutarate = 3-phosphooxypyruvate + L-glutamate. The catalysed reaction is 4-(phosphooxy)-L-threonine + 2-oxoglutarate = (R)-3-hydroxy-2-oxo-4-phosphooxybutanoate + L-glutamate. The protein operates within amino-acid biosynthesis; L-serine biosynthesis; L-serine from 3-phospho-D-glycerate: step 2/3. Its pathway is cofactor biosynthesis; pyridoxine 5'-phosphate biosynthesis; pyridoxine 5'-phosphate from D-erythrose 4-phosphate: step 3/5. In terms of biological role, catalyzes the reversible conversion of 3-phosphohydroxypyruvate to phosphoserine and of 3-hydroxy-2-oxo-4-phosphonooxybutanoate to phosphohydroxythreonine. This is Phosphoserine aminotransferase from Ralstonia pickettii (strain 12J).